We begin with the raw amino-acid sequence, 425 residues long: Glutamyl-tRNA reductase (425 aa).

Substrate contacts are provided by residues 49 to 52 (TCNR), Ser107, 112 to 114 (EPQ), and Gln118. The active-site Nucleophile is Cys50. Position 187–192 (187–192 (GAGETI)) interacts with NADP(+).

The protein belongs to the glutamyl-tRNA reductase family. In terms of assembly, homodimer.

The enzyme catalyses (S)-4-amino-5-oxopentanoate + tRNA(Glu) + NADP(+) = L-glutamyl-tRNA(Glu) + NADPH + H(+). It functions in the pathway porphyrin-containing compound metabolism; protoporphyrin-IX biosynthesis; 5-aminolevulinate from L-glutamyl-tRNA(Glu): step 1/2. Catalyzes the NADPH-dependent reduction of glutamyl-tRNA(Glu) to glutamate 1-semialdehyde (GSA). In Pseudomonas entomophila (strain L48), this protein is Glutamyl-tRNA reductase.